The primary structure comprises 611 residues: Protein ral2 (611 aa).

Kelch repeat units lie at residues 43 to 91 (EAFV…HSGD), 96 to 149 (KLIF…EVNG), and 175 to 224 (YLII…VINK). Serine 604 is modified (phosphoserine).

Functionally, essential for mating and for recognition of the mating pheromone, and for the determination of cell shape. Implicated in activation of the ras1 protein. In Schizosaccharomyces pombe (strain 972 / ATCC 24843) (Fission yeast), this protein is Protein ral2 (ral2).